The sequence spans 469 residues: 3-isopropylmalate dehydratase large subunit (469 aa).

Residues Cys350, Cys410, and Cys413 each contribute to the [4Fe-4S] cluster site.

Belongs to the aconitase/IPM isomerase family. LeuC type 1 subfamily. In terms of assembly, heterodimer of LeuC and LeuD. It depends on [4Fe-4S] cluster as a cofactor.

The enzyme catalyses (2R,3S)-3-isopropylmalate = (2S)-2-isopropylmalate. It functions in the pathway amino-acid biosynthesis; L-leucine biosynthesis; L-leucine from 3-methyl-2-oxobutanoate: step 2/4. Catalyzes the isomerization between 2-isopropylmalate and 3-isopropylmalate, via the formation of 2-isopropylmaleate. This Rhizobium rhizogenes (strain K84 / ATCC BAA-868) (Agrobacterium radiobacter) protein is 3-isopropylmalate dehydratase large subunit.